The sequence spans 649 residues: Phosphomethylpyrimidine synthase (649 aa).

Substrate contacts are provided by residues Asn-235, Met-264, Tyr-293, His-329, Ser-349–Gly-351, Asp-390–Arg-393, and Glu-429. His-433 contacts Zn(2+). Tyr-456 contributes to the substrate binding site. His-497 is a binding site for Zn(2+). Positions 577, 580, and 585 each coordinate [4Fe-4S] cluster. Residues Gly-620–Glu-649 are disordered. A compositionally biased stretch (basic and acidic residues) spans Met-621 to Gly-632.

Belongs to the ThiC family. Homodimer. The cofactor is [4Fe-4S] cluster.

It catalyses the reaction 5-amino-1-(5-phospho-beta-D-ribosyl)imidazole + S-adenosyl-L-methionine = 4-amino-2-methyl-5-(phosphooxymethyl)pyrimidine + CO + 5'-deoxyadenosine + formate + L-methionine + 3 H(+). Its pathway is cofactor biosynthesis; thiamine diphosphate biosynthesis. In terms of biological role, catalyzes the synthesis of the hydroxymethylpyrimidine phosphate (HMP-P) moiety of thiamine from aminoimidazole ribotide (AIR) in a radical S-adenosyl-L-methionine (SAM)-dependent reaction. This Vibrio atlanticus (strain LGP32) (Vibrio splendidus (strain Mel32)) protein is Phosphomethylpyrimidine synthase.